Here is a 563-residue protein sequence, read N- to C-terminus: MLLPAPALRRALLSRPWTGAGLRWKHTSSLKVANEPVLAFTQGSPERDALQKALKDLKGRMEAIPCVVGDEEVWTSDVQYQVSPFNHGHKVAKFCYADKSLLNKAIEAALAARKEWDLKPIADRAQIFLKAADMLSGPRRAEILAKTMVGQGKTVIQAEIDAAAELIDFFRFNAKYAVELEGQQPISVPPSTNSTVYRGLEGFVAAISPFNFTAIGGNLAGAPALMGNVVLWKPSDTAMLASYAVYRILREAGLPPNIIQFVPADGPLFGDTVTSSEHLCGINFTGSVPTFKHLWKQVAQNLDRFHTFPRLAGECGGKNFHFVHRSADVESVVSGTLRSAFEYGGQKCSACSRLYVPHSLWPQIKGRLLEEHSRIKVGDPAEDFGTFFSAVIDAKSFARIKKWLEHARSSPSLTILAGGKCDDSVGYFVEPCIVESKDPQEPIMKEEIFGPVLSVYVYPDDKYKETLQLVDSTTSYGLTGAVFSQDKDVVQEATKVLRNAAGNFYINDKSTGSIVGQQPFGGARASGTNDKPGGPHYILRWTSPQVIKETHKPLGDWSYAYMQ.

Residues 1–24 (MLLPAPALRRALLSRPWTGAGLRW) constitute a mitochondrion transit peptide. The residue at position 31 (lysine 31) is an N6-succinyllysine. A Phosphoserine modification is found at serine 44. Lysine 52 is modified (N6-acetyllysine). An N6-acetyllysine; alternate mark is found at lysine 93, lysine 99, lysine 114, lysine 130, and lysine 175. Residues lysine 93, lysine 99, lysine 114, lysine 130, and lysine 175 each carry the N6-succinyllysine; alternate modification. NAD(+)-binding positions include serine 208, lysine 233, and 286–290 (GSVPT). The active-site Proton acceptor is the glutamate 314. An N6-acetyllysine modification is found at lysine 318. Lysine 347 carries the N6-succinyllysine modification. The Nucleophile role is filled by cysteine 348. Residues lysine 365 and lysine 376 each carry the N6-acetyllysine modification. Lysine 395 carries the post-translational modification N6-succinyllysine. Glutamate 447 lines the NAD(+) pocket. Lysine 462 carries the post-translational modification N6-acetyllysine. Lysine 509 is modified (N6-acetyllysine; alternate). Lysine 509 is subject to N6-succinyllysine; alternate. Substrate is bound at residue serine 513. 2 positions are modified to N6-acetyllysine: lysine 531 and lysine 552.

Belongs to the aldehyde dehydrogenase family. Homodimer. In terms of tissue distribution, highest expression is found in liver followed by skeletal muscle, kidney, heart, brain, placenta, lung and pancreas.

The protein localises to the mitochondrion matrix. The enzyme catalyses L-glutamate 5-semialdehyde + NAD(+) + H2O = L-glutamate + NADH + 2 H(+). The protein operates within amino-acid degradation; L-proline degradation into L-glutamate; L-glutamate from L-proline: step 2/2. Functionally, irreversible conversion of delta-1-pyrroline-5-carboxylate (P5C), derived either from proline or ornithine, to glutamate. This is a necessary step in the pathway interconnecting the urea and tricarboxylic acid cycles. The preferred substrate is glutamic gamma-semialdehyde, other substrates include succinic, glutaric and adipic semialdehydes. The protein is Delta-1-pyrroline-5-carboxylate dehydrogenase, mitochondrial (ALDH4A1) of Homo sapiens (Human).